A 274-amino-acid chain; its full sequence is 2,3,4,5-tetrahydropyridine-2,6-dicarboxylate N-succinyltransferase (274 aa).

Substrate contacts are provided by arginine 104 and aspartate 141.

It belongs to the transferase hexapeptide repeat family. As to quaternary structure, homotrimer.

The protein resides in the cytoplasm. The enzyme catalyses (S)-2,3,4,5-tetrahydrodipicolinate + succinyl-CoA + H2O = (S)-2-succinylamino-6-oxoheptanedioate + CoA. The protein operates within amino-acid biosynthesis; L-lysine biosynthesis via DAP pathway; LL-2,6-diaminopimelate from (S)-tetrahydrodipicolinate (succinylase route): step 1/3. The sequence is that of 2,3,4,5-tetrahydropyridine-2,6-dicarboxylate N-succinyltransferase from Buchnera aphidicola subsp. Baizongia pistaciae (strain Bp).